We begin with the raw amino-acid sequence, 300 residues long: tRNA pseudouridine synthase B (300 aa).

Catalysis depends on Asp47, which acts as the Nucleophile.

It belongs to the pseudouridine synthase TruB family. Type 1 subfamily.

The enzyme catalyses uridine(55) in tRNA = pseudouridine(55) in tRNA. Responsible for synthesis of pseudouridine from uracil-55 in the psi GC loop of transfer RNAs. The polypeptide is tRNA pseudouridine synthase B (Azoarcus sp. (strain BH72)).